Consider the following 132-residue polypeptide: Precursor of CEP10 (132 aa).

The signal sequence occupies residues Met-1 to Asp-19. Residues Lys-20–Asn-66 constitute a propeptide that is removed on maturation. Pro-70 and Pro-73 each carry hydroxyproline. A propeptide spanning residues Pro-82–Lys-91 is cleaved from the precursor. Residues Pro-95, Pro-98, and Pro-102 each carry the hydroxyproline modification. Positions Leu-107–Asn-116 are excised as a propeptide. Hydroxyproline occurs at positions 120, 123, and 127. Pro-132 is a propeptide.

This sequence belongs to the C-terminally encoded plant signaling peptide (CEP) family. As to quaternary structure, interacts with CEP receptors (e.g. CEPR1 and CEPR2). The mature small signaling peptide is generated by proteolytic processing of the longer precursor.

The protein resides in the secreted. Its subcellular location is the extracellular space. It is found in the apoplast. Extracellular signaling peptide that may regulate primary root growth rate and systemic nitrogen (N)-demand signaling. This is Precursor of CEP10 from Arabidopsis thaliana (Mouse-ear cress).